A 188-amino-acid polypeptide reads, in one-letter code: Adenine phosphoribosyltransferase (188 aa).

This sequence belongs to the purine/pyrimidine phosphoribosyltransferase family. As to quaternary structure, homodimer.

The protein resides in the cytoplasm. The catalysed reaction is AMP + diphosphate = 5-phospho-alpha-D-ribose 1-diphosphate + adenine. It functions in the pathway purine metabolism; AMP biosynthesis via salvage pathway; AMP from adenine: step 1/1. Functionally, catalyzes a salvage reaction resulting in the formation of AMP, that is energically less costly than de novo synthesis. This chain is Adenine phosphoribosyltransferase, found in Burkholderia ambifaria (strain MC40-6).